The sequence spans 419 residues: Tyrosine--tRNA ligase 2 (419 aa).

L-tyrosine is bound at residue Tyr-34. A 'HIGH' region motif is present at residues 39 to 48 (PTGDSMHIGH). Residues Tyr-168 and Gln-172 each contribute to the L-tyrosine site. A 'KMSKS' region motif is present at residues 230–234 (KFGKS). Lys-233 provides a ligand contact to ATP. Positions 352–418 (KNIVEWLVDL…GKKNYSLVKL (67 aa)) constitute an S4 RNA-binding domain.

This sequence belongs to the class-I aminoacyl-tRNA synthetase family. TyrS type 1 subfamily. As to quaternary structure, homodimer.

The protein localises to the cytoplasm. It carries out the reaction tRNA(Tyr) + L-tyrosine + ATP = L-tyrosyl-tRNA(Tyr) + AMP + diphosphate + H(+). In terms of biological role, catalyzes the attachment of tyrosine to tRNA(Tyr) in a two-step reaction: tyrosine is first activated by ATP to form Tyr-AMP and then transferred to the acceptor end of tRNA(Tyr). The polypeptide is Tyrosine--tRNA ligase 2 (Bacillus cereus (strain ATCC 10987 / NRS 248)).